We begin with the raw amino-acid sequence, 425 residues long: Glucose-6-phosphate 1-dehydrogenase (425 aa).

Arg44 and Lys135 together coordinate NADP(+). His165, Lys169, Glu201, and Asp220 together coordinate substrate. His225 acts as the Proton acceptor in catalysis. Residue Lys311 coordinates substrate.

The protein belongs to the glucose-6-phosphate dehydrogenase family.

The catalysed reaction is D-glucose 6-phosphate + NADP(+) = 6-phospho-D-glucono-1,5-lactone + NADPH + H(+). The protein operates within carbohydrate degradation; pentose phosphate pathway; D-ribulose 5-phosphate from D-glucose 6-phosphate (oxidative stage): step 1/3. Its function is as follows. Catalyzes the oxidation of glucose 6-phosphate to 6-phosphogluconolactone. The chain is Glucose-6-phosphate 1-dehydrogenase from Helicobacter pylori (strain J99 / ATCC 700824) (Campylobacter pylori J99).